We begin with the raw amino-acid sequence, 457 residues long: Siroheme synthase (457 aa).

The interval 1–204 (MDHLPIFCQL…NDQKAITETT (204 aa)) is precorrin-2 dehydrogenase /sirohydrochlorin ferrochelatase. Residues 22-23 (DV) and 43-44 (LA) contribute to the NAD(+) site. The residue at position 128 (Ser-128) is a Phosphoserine. The tract at residues 216 to 457 (GEVVLVGAGP…RDKLNWFSNH (242 aa)) is uroporphyrinogen-III C-methyltransferase. Residue Pro-225 participates in S-adenosyl-L-methionine binding. The Proton acceptor role is filled by Asp-248. Lys-270 (proton donor) is an active-site residue. Residues 301-303 (GGD), Ile-306, 331-332 (TA), Met-382, and Gly-411 contribute to the S-adenosyl-L-methionine site.

The protein in the N-terminal section; belongs to the precorrin-2 dehydrogenase / sirohydrochlorin ferrochelatase family. In the C-terminal section; belongs to the precorrin methyltransferase family.

It catalyses the reaction uroporphyrinogen III + 2 S-adenosyl-L-methionine = precorrin-2 + 2 S-adenosyl-L-homocysteine + H(+). The catalysed reaction is precorrin-2 + NAD(+) = sirohydrochlorin + NADH + 2 H(+). The enzyme catalyses siroheme + 2 H(+) = sirohydrochlorin + Fe(2+). It functions in the pathway cofactor biosynthesis; adenosylcobalamin biosynthesis; precorrin-2 from uroporphyrinogen III: step 1/1. The protein operates within cofactor biosynthesis; adenosylcobalamin biosynthesis; sirohydrochlorin from precorrin-2: step 1/1. Its pathway is porphyrin-containing compound metabolism; siroheme biosynthesis; precorrin-2 from uroporphyrinogen III: step 1/1. It participates in porphyrin-containing compound metabolism; siroheme biosynthesis; siroheme from sirohydrochlorin: step 1/1. It functions in the pathway porphyrin-containing compound metabolism; siroheme biosynthesis; sirohydrochlorin from precorrin-2: step 1/1. Its function is as follows. Multifunctional enzyme that catalyzes the SAM-dependent methylations of uroporphyrinogen III at position C-2 and C-7 to form precorrin-2 via precorrin-1. Then it catalyzes the NAD-dependent ring dehydrogenation of precorrin-2 to yield sirohydrochlorin. Finally, it catalyzes the ferrochelation of sirohydrochlorin to yield siroheme. This is Siroheme synthase from Shigella dysenteriae serotype 1 (strain Sd197).